Here is a 1413-residue protein sequence, read N- to C-terminus: Sushi, nidogen and EGF-like domain-containing protein 1 (1413 aa).

An N-terminal signal peptide occupies residues 1–24; it reads MRHGVAWALLVAAALGLGARGVRG. Residues 103 to 258 enclose the NIDO domain; sequence AFWADVDNRR…GRWAFRIDDA (156 aa). N-linked (GlcNAc...) asparagine glycosylation is found at Asn145 and Asn204. EGF-like domains follow at residues 268–309, 311–347, and 349–385; these read TTSV…RRCH, DVNECASQPCQNGGTCTHGINSFRCQCPAGFGGPTCE, and AQSPCDTKECQHGGQCQVENGSAVCVCQAGYTGAACE. 18 disulfide bridges follow: Cys272-Cys284, Cys278-Cys297, Cys299-Cys308, Cys315-Cys326, Cys320-Cys335, Cys337-Cys346, Cys353-Cys364, Cys358-Cys373, Cys375-Cys384, Cys391-Cys402, Cys396-Cys411, Cys413-Cys422, Cys433-Cys444, Cys438-Cys453, Cys455-Cys464, Cys472-Cys480, Cys474-Cys488, and Cys490-Cys499. Asn292 is a glycosylation site (N-linked (GlcNAc...) asparagine). In terms of domain architecture, Follistatin-like 1 spans 352-374; it reads PCDTKECQHGGQCQVENGSAVCV. Asn368 is a glycosylation site (N-linked (GlcNAc...) asparagine). The EGF-like 4; calcium-binding domain occupies 387–423; sequence DVDDCSPDPCLNGGSCVDLVGNYTCLCAEPFKGLRCE. A glycan (N-linked (GlcNAc...) asparagine) is linked at Asn408. EGF-like domains follow at residues 429–465 and 468–500; these read VPDACLSAPCHNGGTCVDADQGYVCECPEGFMGLDCR and VPDDCECRNGGRCLGANTTLCQCPLGFFGLLCE. The N-linked (GlcNAc...) asparagine glycan is linked to Asn484. The Follistatin-like 2 domain maps to 507–530; it reads PCNMNTQCPDGGYCMEHGGSYLCV. N-linked (GlcNAc...) asparagine glycosylation is present at Asn536. EGF-like domains lie at 541 to 577, 580 to 616, 619 to 655, and 657 to 693; these read LPSPCDSDPCFNGGSCDAHDDSYTCECPRGFHGKHCE, RPHLCSSGPCRNGGTCKEAGGEYHCSCPYRFTGRHCE, KPDSCASGPCHNGGTCFHYIGKYKCDCPPGFSGRHCE, and APSPCFRSPCVNGGTCEDRDTDFFCHCQAGYMGRRCQ. 26 cysteine pairs are disulfide-bonded: Cys545/Cys556, Cys550/Cys565, Cys567/Cys576, Cys584/Cys595, Cys589/Cys604, Cys606/Cys615, Cys623/Cys634, Cys628/Cys643, Cys645/Cys654, Cys661/Cys672, Cys666/Cys681, Cys683/Cys692, Cys698/Cys739, Cys724/Cys751, Cys757/Cys768, Cys762/Cys777, Cys779/Cys788, Cys795/Cys806, Cys800/Cys815, Cys817/Cys826, Cys833/Cys844, Cys838/Cys853, Cys855/Cys864, Cys871/Cys882, Cys876/Cys891, and Cys893/Cys902. Positions 696–753 constitute a Sushi domain; that stretch reads VDCGPPEEVKHATLRFNGTRLGAVALYACDRGYSLSAPSRIRVCQPHGVWSEPPQCLE. Asn712 carries an N-linked (GlcNAc...) asparagine glycan. One can recognise an EGF-like 11; calcium-binding domain in the interval 753 to 789; it reads EIDECRSQPCLHGGSCQDRVAGYLCLCSTGYEGAHCE. Residues 791-827 enclose the EGF-like 12; calcium-binding domain; it reads ERDECRAHPCRNGGSCRNLPGAYVCRCPAGFVGVHCE. EGF-like domains follow at residues 829–865 and 867–903; these read EVDACDSSPCQHGGRCESGGGAYLCVCPESFFGYHCE and VSDPCFSSPCGGRGYCLASNGSHSCTCKVGYTGEDCA. N-linked (GlcNAc...) asparagine glycosylation occurs at Asn886. Fibronectin type-III domains follow at residues 908–1006, 1007–1105, and 1106–1200; these read PPTA…TRPR, PVEG…TRPL, and PPAN…SPRD. N-linked (GlcNAc...) asparagine glycans are attached at residues Asn977, Asn1015, Asn1109, and Asn1139. Positions 1206-1226 are disordered; that stretch reads WHQGGHHPRVLKNRPPPARLP. Residues 1207–1217 are compositionally biased toward basic residues; sequence HQGGHHPRVLK. In terms of domain architecture, EGF-like 15 spans 1307 to 1343; it reads VPGNCSENPCQNGGTCVPGADAHSCDCGPGFKGRRCE. A glycan (N-linked (GlcNAc...) asparagine) is linked at Asn1310. Cystine bridges form between Cys1311/Cys1322, Cys1316/Cys1331, and Cys1333/Cys1342. The segment at 1394-1413 is disordered; the sequence is TSLKKTPNRKQSKSQTLEKS.

Post-translationally, phosphorylated on serine and threonine residues. In terms of processing, N-glycosylated.

It localises to the secreted. The protein resides in the extracellular space. It is found in the extracellular matrix. The polypeptide is Sushi, nidogen and EGF-like domain-containing protein 1 (Homo sapiens (Human)).